We begin with the raw amino-acid sequence, 261 residues long: Glutathione S-transferase theta-1 (261 aa).

The region spanning 2 to 101 (GLELYLDLLS…YLSRKYNTPD (100 aa)) is the GST N-terminal domain. Glutathione-binding positions include 72-73 (KV) and 85-86 (EC). The region spanning 107-248 (DIKKRAQVDE…LSNIQIDPQL (142 aa)) is the GST C-terminal domain.

The protein belongs to the GST superfamily. Theta family. As to quaternary structure, homodimer.

The protein localises to the cytoplasm. It catalyses the reaction RX + glutathione = an S-substituted glutathione + a halide anion + H(+). Its function is as follows. Conjugation of reduced glutathione to a wide number of exogenous and endogenous hydrophobic electrophiles. The protein is Glutathione S-transferase theta-1 (GSTT1) of Gallus gallus (Chicken).